Here is a 1200-residue protein sequence, read N- to C-terminus: MSPAAAAADGGERRRPPLGGREGRSRARGYGGPAGAAALGLALLGLALYLVPAAAALAWLAVGASAAWWGLSREPRGPRALSSFVRDARRHPRPALTASPPPAKSPVNGSLCEPRSPLGGPDPAELLLMGSYLGKPGPPEPALRQDPRERPGRRPPARSPPPASAVQRVHHVYPALPTPLLRPSRRPPHRDCGPLSSRFVITPRRRYPIQQAQYSLLGALPTVCWNGGHKKAVLSPRNSRMVCSPVTVRIAPPDSKLFRSSMSEQILDTTLSSPSSNAPDPCAKETVLNALKEKKKRTVAEEDQLHLDGQENKRRRHDSGGSGHSAFEPLVANGVPAAFVPKPGSLKRSLASQSSDDHLNKRSRTSSVSSLASACTGGIPSSSRNAITSSYSSTRGISQLWKRSGPTSSPFSSPASSRSQTPERPAKKTREEEPCQQSSSSPPLVTDKESPGEKVTDTTTGKQQSSWTSPPTPGSSGQRKRKIQLLPSRRGDQLTLPPPPELGYSITAEDLDMERKASLQWFNKVLEDKPDDASASATDGPPSTSPPFTFTLPAVGPAASPASLPAPSSNPLLESLKKMQESPAPSSSEPAEAATVAAPSPPKTPSLLAPLVSPLAGPLASTSSDSKPAATFLGLASASSITPLTDSKSSGVSQAEQSVSTPASTASSPTPKPSMLFGMLSPPASSSSLATPAPACASPMFKPIFPATPKSESDSPLPSSSSAATTASSSTAPPTAASTTPTFKPIFDKMEPFTAMPLSTPFSLKQTTATATTTATSAPLFTGLGTATSTVASGTAASASKPVFGFGVTTAASTASSTMTSTSQSVLFGGAPPVTTSSSAPALASIFQFGKPLAPAASAAGTSFSQPLASSTQTAASNSGFSGFGSTLTTSTSAPATTSQPTLTFSNTVTPTFNIPFSSSAKPALPTYPGANSQPTFGATDGATKPALAPSFGSSFTFGNSVASAPSAAPAPATFGSAAQPAFGGLKAAASTFGAPASTQPAFGSTTSVFSFGSATTSGFGAAATAATTTQTTNSGSSSSLFGSSAPSPFTFGGSAAPAGSGGFGLSATPGTSSTSGTFSFGSGQSGTPGTTTSFGSLSQNTLGAPSQGSPFAFSVGSTPESKPVFGGTSTPTFGQSAPAPGVGTTGSSLSFGASSTPAQGFVGVGPFGSAAPSFSIGAGSKTPGARQRLQARRQHTRKK.

The segment at 1 to 29 (MSPAAAAADGGERRRPPLGGREGRSRARG) is disordered. A cisternal side region spans residues 1–56 (MSPAAAAADGGERRRPPLGGREGRSRARGYGGPAGAAALGLALLGLALYLVPAAAA). Positions 10-25 (GGERRRPPLGGREGRS) are enriched in basic and acidic residues. A helical membrane pass occupies residues 57 to 77 (LAWLAVGASAAWWGLSREPRG). Residues 76–1200 (RGPRALSSFV…QARRQHTRKK (1125 aa)) form a pore side region. Residue Ser83 is modified to Phosphoserine. Disordered regions lie at residues 91-167 (HPRP…SAVQ) and 177-196 (PTPL…GPLS). Positions 143 to 152 (LRQDPRERPG) are enriched in basic and acidic residues. Position 244 is a phosphoserine (Ser244). Disordered regions lie at residues 294 to 328 (KKKR…SAFE), 345 to 509 (SLKR…ITAE), 530 to 627 (PDDA…SDSK), 640 to 692 (SITP…LATP), 706 to 744 (PATP…PTFK), 1075 to 1151 (TSGT…SSLS), and 1173 to 1200 (PSFS…TRKK). Residues 298–312 (TVAEEDQLHLDGQEN) show a composition bias toward basic and acidic residues. Phosphoserine is present on residues Ser319, Ser322, Ser325, Ser345, Ser355, Ser367, and Ser370. Over residues 365–374 (TSSVSSLASA) the composition is skewed to low complexity. Residues 379-397 (IPSSSRNAITSSYSSTRGI) are compositionally biased toward polar residues. Residues 404 to 419 (SGPTSSPFSSPASSRS) are compositionally biased toward low complexity. 6 positions are modified to phosphoserine: Ser408, Ser409, Ser412, Ser413, Ser416, and Ser417. 2 stretches are compositionally biased toward basic and acidic residues: residues 424–433 (RPAKKTREEE) and 446–456 (TDKESPGEKVT). 4 stretches are compositionally biased toward low complexity: residues 463 to 477 (QQSS…GSSG), 546 to 574 (PPFT…PLLE), 581 to 598 (ESPA…TVAA), and 605 to 621 (PSLL…PLAS). Residues 640–657 (SITPLTDSKSSGVSQAEQ) are compositionally biased toward polar residues. Composition is skewed to low complexity over residues 658-669 (SVSTPASTASSP), 681-692 (SPPASSSSLATP), 715-742 (SPLP…TTPT), and 1075-1099 (TSGT…GSLS). Positions 1100-1121 (QNTLGAPSQGSPFAFSVGSTPE) are enriched in polar residues. The segment covering 1190-1200 (LQARRQHTRKK) has biased composition (basic residues).

It belongs to the POM121 family. Post-translationally, proteolytically cleaved by caspase-3 during apoptosis.

It is found in the nucleus. It localises to the nuclear pore complex. Its subcellular location is the nucleus membrane. The protein localises to the endoplasmic reticulum membrane. Its function is as follows. Essential component of the nuclear pore complex (NPC). The repeat-containing domain may be involved in anchoring components of the pore complex to the pore membrane. When overexpressed in cells induces the formation of cytoplasmic annulate lamellae (AL). This Mus musculus (Mouse) protein is Nuclear envelope pore membrane protein POM 121 (Pom121).